Consider the following 116-residue polypeptide: M-zodatoxin-Lt6a/c (116 aa).

An N-terminal signal peptide occupies residues 1–22 (MKYFVVALTLAVAFVCIEECKT). Propeptides lie at residues 23-44 (VEIGYAVSEDFDQNEIDNDEAR) and 80-83 (EEAR). 2 consecutive short sequence motifs (processing quadruplet motif) follow at residues 41–44 (DEAR) and 80–83 (EEAR). Q84 is modified (pyrrolidone carboxylic acid).

This sequence belongs to the cationic peptide 03 (latarcin) family. 06 subfamily. Cleavage of the propeptide depends on the processing quadruplet motif (XXXR, with at least one of X being E). In terms of tissue distribution, expressed by the venom gland.

It localises to the secreted. Functionally, does not have antimicrobial activity against Gram-positive bacteria (A.globiformis VKM Ac-1112 (MIC&gt;70 uM) and B.subtilis VKM B-501 (MIC&gt;70 uM)), Gram-negative bacteria (E.coli DH5-alpha (MIC&gt;70 uM), E.coli MH1 (MIC&gt;70 uM) and P.aeruginosa PAO1 (MIC&gt;70 uM)), yeast (P.pastoris GS115 (MIC&gt;70 uM) or S.cerevisiae Y190 (MIC&gt;70 uM)). Does not have hemolytic activity against rabbit erythrocytes. However, it causes some conductance changes in planar bilayer membranes, without membrane rupture, suggesting a cytolytic function on other biological targets. It causes paralysis, but is not lethal when injected into insect larvae. This Lachesana tarabaevi (Spider) protein is M-zodatoxin-Lt6a/c.